The chain runs to 274 residues: Leucyl/phenylalanyl-tRNA--protein transferase (274 aa).

The protein belongs to the L/F-transferase family.

The protein resides in the cytoplasm. The catalysed reaction is N-terminal L-lysyl-[protein] + L-leucyl-tRNA(Leu) = N-terminal L-leucyl-L-lysyl-[protein] + tRNA(Leu) + H(+). It carries out the reaction N-terminal L-arginyl-[protein] + L-leucyl-tRNA(Leu) = N-terminal L-leucyl-L-arginyl-[protein] + tRNA(Leu) + H(+). It catalyses the reaction L-phenylalanyl-tRNA(Phe) + an N-terminal L-alpha-aminoacyl-[protein] = an N-terminal L-phenylalanyl-L-alpha-aminoacyl-[protein] + tRNA(Phe). Functions in the N-end rule pathway of protein degradation where it conjugates Leu, Phe and, less efficiently, Met from aminoacyl-tRNAs to the N-termini of proteins containing an N-terminal arginine or lysine. This chain is Leucyl/phenylalanyl-tRNA--protein transferase, found in Psychrobacter cryohalolentis (strain ATCC BAA-1226 / DSM 17306 / VKM B-2378 / K5).